The primary structure comprises 485 residues: Putative aldehyde dehydrogenase AldY (485 aa).

Residue 231-236 (GSTAVG) coordinates NAD(+). Residues E253 and C287 contribute to the active site.

The protein belongs to the aldehyde dehydrogenase family.

The enzyme catalyses an aldehyde + NAD(+) + H2O = a carboxylate + NADH + 2 H(+). May contribute to protect cells against stress due to ethanol and related compounds. The chain is Putative aldehyde dehydrogenase AldY (aldY) from Bacillus subtilis (strain 168).